A 339-amino-acid chain; its full sequence is Protein FAM131B (339 aa).

The disordered stretch occupies residues 1 to 22; that stretch reads MDSTSSLHGSSLHRPSTEQTRT. S47, S114, and S117 each carry phosphoserine. A disordered region spans residues 222–339; that stretch reads GPAFGDSQPS…PLLTQPSTPA (118 aa). Composition is skewed to polar residues over residues 239–250 and 324–339; these read QPASGYSAQEPS and PTTS…STPA. T325 carries the post-translational modification Phosphothreonine. Residue S327 is modified to Phosphoserine.

It belongs to the FAM131 family.

This is Protein FAM131B (FAM131B) from Bos taurus (Bovine).